Here is a 582-residue protein sequence, read N- to C-terminus: Trans-activating transcriptional regulatory protein (582 aa).

The disordered stretch occupies residues 101 to 131; it reads QPVVEQPSPSSAYHAESFEHSAGVNQPSATG.

Belongs to the nucleopolyhedrovirus IE-1 protein family. As to quaternary structure, homodimer. Interacts with helicase and LEF-3. Post-translationally, phosphorylated.

It is found in the host nucleus. Its function is as follows. Regulatory transcriptional protein, which trans-activates gene expression from early baculovirus promoters. Can also trans-activate its own promoter, suggesting an autoregulation during infection of host cells. Also promotes viral DNA genome replication via the N-terminal region. This chain is Trans-activating transcriptional regulatory protein (IE1), found in Autographa californica nuclear polyhedrosis virus (AcMNPV).